The primary structure comprises 364 residues: Putative glutamate--cysteine ligase 2-2 (364 aa).

The protein belongs to the glutamate--cysteine ligase type 2 family. YbdK subfamily.

The catalysed reaction is L-cysteine + L-glutamate + ATP = gamma-L-glutamyl-L-cysteine + ADP + phosphate + H(+). In terms of biological role, ATP-dependent carboxylate-amine ligase which exhibits weak glutamate--cysteine ligase activity. This Mycobacterium sp. (strain JLS) protein is Putative glutamate--cysteine ligase 2-2.